The primary structure comprises 336 residues: Holliday junction branch migration complex subunit RuvB (336 aa).

The interval 1–185 (MSIIVERLLS…FGVLSRVEYY (185 aa)) is large ATPase domain (RuvB-L). ATP-binding positions include leucine 24, arginine 25, glycine 66, lysine 69, threonine 70, threonine 71, 132 to 134 (EDF), arginine 175, tyrosine 185, and arginine 222. Residue threonine 70 participates in Mg(2+) binding. A small ATPAse domain (RuvB-S) region spans residues 186–256 (TVDQLSAIVE…ITQMALELLQ (71 aa)). Residues 259–336 (KLGLDHIDHK…EHFGMEIPKV (78 aa)) are head domain (RuvB-H). Residues arginine 314 and arginine 319 each coordinate DNA.

This sequence belongs to the RuvB family. As to quaternary structure, homohexamer. Forms an RuvA(8)-RuvB(12)-Holliday junction (HJ) complex. HJ DNA is sandwiched between 2 RuvA tetramers; dsDNA enters through RuvA and exits via RuvB. An RuvB hexamer assembles on each DNA strand where it exits the tetramer. Each RuvB hexamer is contacted by two RuvA subunits (via domain III) on 2 adjacent RuvB subunits; this complex drives branch migration. In the full resolvosome a probable DNA-RuvA(4)-RuvB(12)-RuvC(2) complex forms which resolves the HJ.

The protein resides in the cytoplasm. The enzyme catalyses ATP + H2O = ADP + phosphate + H(+). In terms of biological role, the RuvA-RuvB-RuvC complex processes Holliday junction (HJ) DNA during genetic recombination and DNA repair, while the RuvA-RuvB complex plays an important role in the rescue of blocked DNA replication forks via replication fork reversal (RFR). RuvA specifically binds to HJ cruciform DNA, conferring on it an open structure. The RuvB hexamer acts as an ATP-dependent pump, pulling dsDNA into and through the RuvAB complex. RuvB forms 2 homohexamers on either side of HJ DNA bound by 1 or 2 RuvA tetramers; 4 subunits per hexamer contact DNA at a time. Coordinated motions by a converter formed by DNA-disengaged RuvB subunits stimulates ATP hydrolysis and nucleotide exchange. Immobilization of the converter enables RuvB to convert the ATP-contained energy into a lever motion, pulling 2 nucleotides of DNA out of the RuvA tetramer per ATP hydrolyzed, thus driving DNA branch migration. The RuvB motors rotate together with the DNA substrate, which together with the progressing nucleotide cycle form the mechanistic basis for DNA recombination by continuous HJ branch migration. Branch migration allows RuvC to scan DNA until it finds its consensus sequence, where it cleaves and resolves cruciform DNA. This Bacillus cereus (strain ATCC 14579 / DSM 31 / CCUG 7414 / JCM 2152 / NBRC 15305 / NCIMB 9373 / NCTC 2599 / NRRL B-3711) protein is Holliday junction branch migration complex subunit RuvB.